The chain runs to 551 residues: Inosine-5'-monophosphate dehydrogenase (551 aa).

CBS domains are found at residues 102-163 (FILD…PLSE) and 165-221 (MTSD…PLAS). NAD(+)-binding positions include 258 to 260 (DSS) and 308 to 310 (GMG). Gly310 and Gly312 together coordinate K(+). Ser313 lines the IMP pocket. Cys315 contacts K(+). Cys315 acts as the Thioimidate intermediate in catalysis. IMP-binding positions include 349–351 (DGG), 372–373 (GS), and 396–400 (YRGMG). Positions 407–462 (AGTRRTASPPARGLRSPEASPSTAASSGGASRASALSEASPSAKSEASRTSTSTGS) are disordered. The span at 422–462 (SPEASPSTAASSGGASRASALSEASPSAKSEASRTSTSTGS) shows a compositional bias: low complexity. Arg465 serves as the catalytic Proton acceptor. Gln477 is an IMP binding site. K(+) is bound by residues Glu536 and Gly537.

Belongs to the IMPDH/GMPR family. In terms of assembly, homotetramer. K(+) is required as a cofactor.

It is found in the cytoplasm. It carries out the reaction IMP + NAD(+) + H2O = XMP + NADH + H(+). It participates in purine metabolism; XMP biosynthesis via de novo pathway; XMP from IMP: step 1/1. With respect to regulation, mycophenolic acid (MPA) is a non-competitive inhibitor that prevents formation of the closed enzyme conformation by binding to the same site as the amobile flap. In contrast, mizoribine monophosphate (MZP) is a competitive inhibitor that induces the closed conformation. MPA is a potent inhibitor of mammalian IMPDHs but a poor inhibitor of the bacterial enzymes. MZP is a more potent inhibitor of bacterial IMPDH. Potently inhibited by MPA and adenine dinucleotide analogs such as thiazole-4-carboxamide adenine dinucleotide (TAD). Catalyzes the conversion of inosine 5'-phosphate (IMP) to xanthosine 5'-phosphate (XMP), the first committed and rate-limiting step in the de novo synthesis of guanine nucleotides, and therefore plays an important role in the regulation of cell growth. This is Inosine-5'-monophosphate dehydrogenase from Toxoplasma gondii.